An 893-amino-acid polypeptide reads, in one-letter code: Beta-adaptin-like protein C (893 aa).

Residues 593 to 621 (TEDEDYVEGSETGYPEASGNPVDGAASPS) are disordered.

It belongs to the adaptor complexes large subunit family. As to quaternary structure, adaptor protein complexes are heterotetramers composed of two large adaptins (beta-type subunit and alpha-type or delta-type or epsilon-type or gamma-type subunit), a medium adaptin (mu-type subunit) and a small adaptin (sigma-type subunit).

It localises to the golgi apparatus. The protein resides in the trans-Golgi network. Its subcellular location is the cytoplasmic vesicle. It is found in the clathrin-coated vesicle membrane. Subunit of clathrin-associated adaptor protein complex that plays a role in protein sorting in the late-Golgi/trans-Golgi network (TGN) and/or endosomes. The AP complexes mediate both the recruitment of clathrin to membranes and the recognition of sorting signals within the cytosolic tails of transmembrane cargo molecules. The chain is Beta-adaptin-like protein C (BETAC-AD) from Arabidopsis thaliana (Mouse-ear cress).